The sequence spans 448 residues: Phosphoglucosamine mutase (448 aa).

S100 functions as the Phosphoserine intermediate in the catalytic mechanism. 4 residues coordinate Mg(2+): S100, D240, D242, and D244. Position 100 is a phosphoserine (S100).

The protein belongs to the phosphohexose mutase family. Requires Mg(2+) as cofactor. In terms of processing, activated by phosphorylation.

It carries out the reaction alpha-D-glucosamine 1-phosphate = D-glucosamine 6-phosphate. In terms of biological role, catalyzes the conversion of glucosamine-6-phosphate to glucosamine-1-phosphate. This chain is Phosphoglucosamine mutase, found in Bacillus cereus (strain ATCC 10987 / NRS 248).